We begin with the raw amino-acid sequence, 300 residues long: uncharacterized protein (300 aa).

The active-site Proton donor is Tyr53. Ser210–Glu220 provides a ligand contact to NADP(+).

The protein belongs to the aldo/keto reductase family. Aldo/keto reductase 2 subfamily.

This is an uncharacterized protein from Bacillus subtilis (strain 168).